We begin with the raw amino-acid sequence, 62 residues long: Potassium channel toxin kappa-KTx 3.3 (62 aa).

Positions 1–26 are cleaved as a signal peptide; that stretch reads MKSTLMTASLLILVLLSIVDYASVYA. Positions 27-36 are excised as a propeptide; it reads ELIDSEISME. Disulfide bonds link Cys-43–Cys-61 and Cys-47–Cys-57.

The protein belongs to the short scorpion toxin superfamily. Potassium channel inhibitor kappa-KTx family. Kappa-KTx 3 subfamily. In terms of tissue distribution, expressed by the venom gland.

It is found in the secreted. Its function is as follows. Potassium channel inhibitor (Kv). The polypeptide is Potassium channel toxin kappa-KTx 3.3 (Heterometrus petersii (Asian forest scorpion)).